Reading from the N-terminus, the 494-residue chain is Bifunctional NAD(P)H-hydrate repair enzyme Nnr (494 aa).

Residues Met-1–Asn-221 form an NAD(P)H-hydrate epimerase region. In terms of domain architecture, YjeF N-terminal spans Leu-17–Gln-219. The tract at residues Asn-65 to Asp-69 is NADPHX 1; for epimerase activity. 2 residues coordinate K(+): Asn-66 and Asp-129. The interval Gly-133–Val-139 is NADPHX 1; for epimerase activity. Position 162 (Asp-162) interacts with (6S)-NADPHX. Residue Ser-165 coordinates K(+). In terms of domain architecture, YjeF C-terminal spans Asp-229–Asn-494. The ADP-dependent (S)-NAD(P)H-hydrate dehydratase stretch occupies residues Asp-229–Asn-494. Gly-325 serves as a coordination point for (6S)-NADPHX. The segment at His-371–Arg-377 is NADPHX 2; for dehydratase activity. ADP contacts are provided by residues Lys-408 to Thr-412 and Asn-427 to Gly-436. Asp-437 is a (6S)-NADPHX binding site.

It in the N-terminal section; belongs to the NnrE/AIBP family. The protein in the C-terminal section; belongs to the NnrD/CARKD family. The cofactor is K(+).

It catalyses the reaction (6S)-NADHX + ADP = AMP + phosphate + NADH + H(+). It carries out the reaction (6S)-NADPHX + ADP = AMP + phosphate + NADPH + H(+). The enzyme catalyses (6R)-NADHX = (6S)-NADHX. The catalysed reaction is (6R)-NADPHX = (6S)-NADPHX. Functionally, bifunctional enzyme that catalyzes the epimerization of the S- and R-forms of NAD(P)HX and the dehydration of the S-form of NAD(P)HX at the expense of ADP, which is converted to AMP. This allows the repair of both epimers of NAD(P)HX, a damaged form of NAD(P)H that is a result of enzymatic or heat-dependent hydration. The chain is Bifunctional NAD(P)H-hydrate repair enzyme Nnr (nnr) from Vibrio cholerae serotype O1 (strain ATCC 39315 / El Tor Inaba N16961).